Reading from the N-terminus, the 83-residue chain is Large ribosomal subunit protein uL23 (83 aa).

This sequence belongs to the universal ribosomal protein uL23 family. Part of the 50S ribosomal subunit. Contacts protein L29.

In terms of biological role, binds to 23S rRNA. One of the proteins that surrounds the polypeptide exit tunnel on the outside of the ribosome. The polypeptide is Large ribosomal subunit protein uL23 (Thermoplasma volcanium (strain ATCC 51530 / DSM 4299 / JCM 9571 / NBRC 15438 / GSS1)).